A 595-amino-acid chain; its full sequence is Aspartate--tRNA(Asp/Asn) ligase (595 aa).

An L-aspartate-binding site is contributed by Glu175. The tract at residues 199-202 (QQYK) is aspartate. 2 residues coordinate L-aspartate: Arg221 and His454. 221 to 223 (RDE) lines the ATP pocket. Residue Glu488 participates in ATP binding. An L-aspartate-binding site is contributed by Arg495. 540-543 (GIDR) serves as a coordination point for ATP.

The protein belongs to the class-II aminoacyl-tRNA synthetase family. Type 1 subfamily. As to quaternary structure, homodimer.

The protein resides in the cytoplasm. The catalysed reaction is tRNA(Asx) + L-aspartate + ATP = L-aspartyl-tRNA(Asx) + AMP + diphosphate. Aspartyl-tRNA synthetase with relaxed tRNA specificity since it is able to aspartylate not only its cognate tRNA(Asp) but also tRNA(Asn). Reaction proceeds in two steps: L-aspartate is first activated by ATP to form Asp-AMP and then transferred to the acceptor end of tRNA(Asp/Asn). The protein is Aspartate--tRNA(Asp/Asn) ligase of Brucella canis (strain ATCC 23365 / NCTC 10854 / RM-666).